The chain runs to 500 residues: Aspartyl/glutamyl-tRNA(Asn/Gln) amidotransferase subunit B (500 aa).

Belongs to the GatB/GatE family. GatB subfamily. Heterotrimer of A, B and C subunits.

It catalyses the reaction L-glutamyl-tRNA(Gln) + L-glutamine + ATP + H2O = L-glutaminyl-tRNA(Gln) + L-glutamate + ADP + phosphate + H(+). The enzyme catalyses L-aspartyl-tRNA(Asn) + L-glutamine + ATP + H2O = L-asparaginyl-tRNA(Asn) + L-glutamate + ADP + phosphate + 2 H(+). Functionally, allows the formation of correctly charged Asn-tRNA(Asn) or Gln-tRNA(Gln) through the transamidation of misacylated Asp-tRNA(Asn) or Glu-tRNA(Gln) in organisms which lack either or both of asparaginyl-tRNA or glutaminyl-tRNA synthetases. The reaction takes place in the presence of glutamine and ATP through an activated phospho-Asp-tRNA(Asn) or phospho-Glu-tRNA(Gln). The protein is Aspartyl/glutamyl-tRNA(Asn/Gln) amidotransferase subunit B of Clavibacter michiganensis subsp. michiganensis (strain NCPPB 382).